Consider the following 136-residue polypeptide: Phosphoribosyl-AMP cyclohydrolase (136 aa).

Residue Asp-89 coordinates Mg(2+). Residue Cys-90 participates in Zn(2+) binding. 2 residues coordinate Mg(2+): Asp-91 and Asp-93. Zn(2+) is bound by residues Cys-106 and Cys-113.

This sequence belongs to the PRA-CH family. In terms of assembly, homodimer. It depends on Mg(2+) as a cofactor. Zn(2+) serves as cofactor.

The protein resides in the cytoplasm. The catalysed reaction is 1-(5-phospho-beta-D-ribosyl)-5'-AMP + H2O = 1-(5-phospho-beta-D-ribosyl)-5-[(5-phospho-beta-D-ribosylamino)methylideneamino]imidazole-4-carboxamide. It participates in amino-acid biosynthesis; L-histidine biosynthesis; L-histidine from 5-phospho-alpha-D-ribose 1-diphosphate: step 3/9. Its function is as follows. Catalyzes the hydrolysis of the adenine ring of phosphoribosyl-AMP. The sequence is that of Phosphoribosyl-AMP cyclohydrolase from Bifidobacterium longum subsp. infantis (strain ATCC 15697 / DSM 20088 / JCM 1222 / NCTC 11817 / S12).